The following is a 751-amino-acid chain: Oxysterol-binding protein-related protein 11 (751 aa).

At methionine 1 the chain carries N-acetylmethionine. The interval 1-57 (MQGGEPASVMKVSESEGKLEGLATAVTPNKNSGNSSCGGAISSSSSNSSRGGSAKGW) is disordered. At serine 15 the chain carries Phosphoserine. Position 27 is a phosphothreonine (threonine 27). Over residues 31–52 (NSGNSSCGGAISSSSSNSSRGG) the composition is skewed to low complexity. Residues 63–160 (MESVNGYLMK…WVSRLQICTQ (98 aa)) form the PH domain. A phosphoserine mark is found at serine 177, serine 179, serine 182, serine 186, serine 189, and serine 194. Disordered regions lie at residues 475 to 497 (SGVSSSSSTPAITDHAPLPEEAP) and 694 to 716 (EIDKATEHKRSLEERQRTEERLR).

This sequence belongs to the OSBP family. Heterodimer with OSBPL9.

It localises to the late endosome membrane. It is found in the golgi apparatus. The protein localises to the trans-Golgi network membrane. It catalyses the reaction a 1,2-diacyl-sn-glycero-3-phospho-(1D-myo-inositol 4-phosphate)(out) + a 1,2-diacyl-sn-glycero-3-phospho-L-serine(in) = a 1,2-diacyl-sn-glycero-3-phospho-(1D-myo-inositol 4-phosphate)(in) + a 1,2-diacyl-sn-glycero-3-phospho-L-serine(out). Its function is as follows. Plays a role in regulating ADIPOQ and FABP4 levels in differentiating adipocytes and is also involved in regulation of adipocyte triglyceride storage. Weakly binds 25-hydroxycholesterol. Interacts with OSBPL9 to function as lipid transfer proteins. Together they form a heterodimer that localizes at the ER-trans-Golgi membrane contact sites, and exchanges phosphatidylserine (1,2-diacyl-sn-glycero-3-phospho-L-serine, PS) for phosphatidylinositol-4-phosphate (1,2-diacyl-sn-glycero-3-phospho-(1D-myo-inositol 4-phosphate), PI(4)P) between the two organelles, a step that is critical for sphingomyelin synthesis in the Golgi complex. The protein is Oxysterol-binding protein-related protein 11 (Osbpl11) of Mus musculus (Mouse).